Consider the following 365-residue polypeptide: 3-isopropylmalate dehydrogenase (365 aa).

Position 78-89 (78-89 (GPKWGTGKVRPE)) interacts with NAD(+). The substrate site is built by Arg-96, Arg-106, Arg-135, and Asp-224. Asp-224, Asp-249, and Asp-253 together coordinate Mg(2+). An NAD(+)-binding site is contributed by 289–301 (GSAPDISGKGIVN).

It belongs to the isocitrate and isopropylmalate dehydrogenases family. Homodimer. Mg(2+) is required as a cofactor. The cofactor is Mn(2+).

It localises to the cytoplasm. It carries out the reaction (2R,3S)-3-isopropylmalate + NAD(+) = 4-methyl-2-oxopentanoate + CO2 + NADH. It functions in the pathway amino-acid biosynthesis; L-leucine biosynthesis; L-leucine from 3-methyl-2-oxobutanoate: step 3/4. In terms of biological role, catalyzes the oxidation of 3-carboxy-2-hydroxy-4-methylpentanoate (3-isopropylmalate) to 3-carboxy-4-methyl-2-oxopentanoate. The product decarboxylates to 4-methyl-2 oxopentanoate. This Zymoseptoria tritici (Speckled leaf blotch fungus) protein is 3-isopropylmalate dehydrogenase (LEUC).